We begin with the raw amino-acid sequence, 242 residues long: Ribosomal RNA small subunit methyltransferase G (242 aa).

Residues Gly78, Phe83, 129–130 (AE), and Arg148 contribute to the S-adenosyl-L-methionine site. The tract at residues 221–242 (TKKRYPRKAGVPEKSPIGGKHD) is disordered.

Belongs to the methyltransferase superfamily. RNA methyltransferase RsmG family.

The protein localises to the cytoplasm. In terms of biological role, specifically methylates the N7 position of a guanine in 16S rRNA. The chain is Ribosomal RNA small subunit methyltransferase G from Oenococcus oeni (strain ATCC BAA-331 / PSU-1).